A 613-amino-acid chain; its full sequence is UvrABC system protein C (613 aa).

The GIY-YIG domain occupies 20–98 (ERPGVYLMYD…IKRHKPRYNI (79 aa)). Positions 209–244 (FDVIESLGHKMQQASDEFEFEKAALYRDKISALRAI) constitute a UVR domain.

The protein belongs to the UvrC family. As to quaternary structure, interacts with UvrB in an incision complex.

It is found in the cytoplasm. The UvrABC repair system catalyzes the recognition and processing of DNA lesions. UvrC both incises the 5' and 3' sides of the lesion. The N-terminal half is responsible for the 3' incision and the C-terminal half is responsible for the 5' incision. This Hydrogenovibrio crunogenus (strain DSM 25203 / XCL-2) (Thiomicrospira crunogena) protein is UvrABC system protein C.